The sequence spans 193 residues: ATP-dependent Clp protease proteolytic subunit (193 aa).

Ser-98 functions as the Nucleophile in the catalytic mechanism. Residue His-123 is part of the active site.

It belongs to the peptidase S14 family. Fourteen ClpP subunits assemble into 2 heptameric rings which stack back to back to give a disk-like structure with a central cavity, resembling the structure of eukaryotic proteasomes.

The protein resides in the cytoplasm. The catalysed reaction is Hydrolysis of proteins to small peptides in the presence of ATP and magnesium. alpha-casein is the usual test substrate. In the absence of ATP, only oligopeptides shorter than five residues are hydrolyzed (such as succinyl-Leu-Tyr-|-NHMec, and Leu-Tyr-Leu-|-Tyr-Trp, in which cleavage of the -Tyr-|-Leu- and -Tyr-|-Trp bonds also occurs).. Cleaves peptides in various proteins in a process that requires ATP hydrolysis. Has a chymotrypsin-like activity. Plays a major role in the degradation of misfolded proteins. The polypeptide is ATP-dependent Clp protease proteolytic subunit (Clostridium acetobutylicum (strain ATCC 824 / DSM 792 / JCM 1419 / IAM 19013 / LMG 5710 / NBRC 13948 / NRRL B-527 / VKM B-1787 / 2291 / W)).